The chain runs to 95 residues: Co-chaperonin GroES (95 aa).

It belongs to the GroES chaperonin family. As to quaternary structure, heptamer of 7 subunits arranged in a ring. Interacts with the chaperonin GroEL.

The protein localises to the cytoplasm. Functionally, together with the chaperonin GroEL, plays an essential role in assisting protein folding. The GroEL-GroES system forms a nano-cage that allows encapsulation of the non-native substrate proteins and provides a physical environment optimized to promote and accelerate protein folding. GroES binds to the apical surface of the GroEL ring, thereby capping the opening of the GroEL channel. In Rickettsia typhi (strain ATCC VR-144 / Wilmington), this protein is Co-chaperonin GroES.